Consider the following 289-residue polypeptide: Polyketide biosynthesis malonyl CoA-acyl carrier protein transacylase BaeC (289 aa).

Residues Ser87 and His193 contribute to the active site.

The protein belongs to the FabD family.

It localises to the cytoplasm. It carries out the reaction holo-[ACP] + malonyl-CoA = malonyl-[ACP] + CoA. Its pathway is antibiotic biosynthesis; bacillaene biosynthesis. In terms of biological role, involved in some intermediate steps for the synthesis of the antibiotic polyketide bacillaene which is involved in secondary metabolism. It catalyzes the transfer of the malonyl-CoA group to the acyl-carrier-protein AcpK (Mal-AcpK). This Bacillus velezensis (strain DSM 23117 / BGSC 10A6 / LMG 26770 / FZB42) (Bacillus amyloliquefaciens subsp. plantarum) protein is Polyketide biosynthesis malonyl CoA-acyl carrier protein transacylase BaeC (baeC).